The following is a 302-amino-acid chain: Aquaporin NIP3-1 (302 aa).

The interval 1 to 31 (MEPGSTPPNGSAPATPGTPAPLFSSGGPRVD) is disordered. Low complexity predominate over residues 7–21 (PPNGSAPATPGTPAP). A run of 2 helical transmembrane segments spans residues 76-96 (LGAEFVGTFILIFFATAAPIV) and 102-122 (GAISPFGNAACAGLAVATVIL). The NPA 1 signature appears at 133 to 135 (NPS). 3 helical membrane passes run 149 to 169 (LQVPAYVAVQALASVCAAFAL), 193 to 213 (AFFTEFIISFNLLFVVTAVAT), and 217 to 237 (AVGELAGIAVGAAVTLNILVA). Positions 246 to 248 (NPV) match the NPA 2 motif. The chain crosses the membrane as a helical span at residues 264-284 (WIYLLAPTLGALAGASVYKAV).

This sequence belongs to the MIP/aquaporin (TC 1.A.8) family. NIP (TC 1.A.8.12) subfamily.

The protein resides in the membrane. Functionally, aquaporins facilitate the transport of water and small neutral solutes across cell membranes. This chain is Aquaporin NIP3-1 (NIP3-1), found in Zea mays (Maize).